The following is a 72-amino-acid chain: Translation initiation factor IF-1 (72 aa).

Residues 1–72 form the S1-like domain; that stretch reads MAKEDVIEIE…TRGRITYRFK (72 aa).

The protein belongs to the IF-1 family. Component of the 30S ribosomal translation pre-initiation complex which assembles on the 30S ribosome in the order IF-2 and IF-3, IF-1 and N-formylmethionyl-tRNA(fMet); mRNA recruitment can occur at any time during PIC assembly.

The protein localises to the cytoplasm. In terms of biological role, one of the essential components for the initiation of protein synthesis. Stabilizes the binding of IF-2 and IF-3 on the 30S subunit to which N-formylmethionyl-tRNA(fMet) subsequently binds. Helps modulate mRNA selection, yielding the 30S pre-initiation complex (PIC). Upon addition of the 50S ribosomal subunit IF-1, IF-2 and IF-3 are released leaving the mature 70S translation initiation complex. The chain is Translation initiation factor IF-1 from Streptococcus agalactiae serotype Ia (strain ATCC 27591 / A909 / CDC SS700).